The following is a 160-amino-acid chain: Ribosomal RNA large subunit methyltransferase H (160 aa).

The S-adenosyl-L-methionine site is built by leucine 76 and glycine 108.

It belongs to the RNA methyltransferase RlmH family. In terms of assembly, homodimer.

The protein localises to the cytoplasm. The catalysed reaction is pseudouridine(1915) in 23S rRNA + S-adenosyl-L-methionine = N(3)-methylpseudouridine(1915) in 23S rRNA + S-adenosyl-L-homocysteine + H(+). In terms of biological role, specifically methylates the pseudouridine at position 1915 (m3Psi1915) in 23S rRNA. This is Ribosomal RNA large subunit methyltransferase H from Bradyrhizobium diazoefficiens (strain JCM 10833 / BCRC 13528 / IAM 13628 / NBRC 14792 / USDA 110).